A 506-amino-acid polypeptide reads, in one-letter code: Maturase K (506 aa).

The protein belongs to the intron maturase 2 family. MatK subfamily.

The protein resides in the plastid. It is found in the chloroplast. Usually encoded in the trnK tRNA gene intron. Probably assists in splicing its own and other chloroplast group II introns. The polypeptide is Maturase K (Trifolium hirtum (Rose clover)).